A 539-amino-acid polypeptide reads, in one-letter code: Inosine-5'-monophosphate dehydrogenase (539 aa).

CBS domains are found at residues 140-196 (IIVN…DMPI) and 200-257 (MTRE…PRAC). NAD(+) is bound by residues aspartate 292 and 343-345 (GIG). 2 residues coordinate K(+): glycine 345 and glycine 347. IMP is bound at residue serine 348. Cysteine 350 contributes to the K(+) binding site. Catalysis depends on cysteine 350, which acts as the Thioimidate intermediate. Residues 383 to 385 (DGG), 406 to 407 (GS), and 430 to 434 (YRGMG) contribute to the IMP site. Arginine 446 (proton acceptor) is an active-site residue. Glutamate 460 lines the IMP pocket. Residues glutamate 514 and histidine 516 each contribute to the K(+) site. Residues 517 to 539 (PHDIAITQEAPNYSPDVHSGDAG) form a disordered region.

It belongs to the IMPDH/GMPR family. In terms of assembly, homotetramer. Requires K(+) as cofactor.

The enzyme catalyses IMP + NAD(+) + H2O = XMP + NADH + H(+). It functions in the pathway purine metabolism; XMP biosynthesis via de novo pathway; XMP from IMP: step 1/1. Mycophenolic acid (MPA) is a non-competitive inhibitor that prevents formation of the closed enzyme conformation by binding to the same site as the amobile flap. In contrast, mizoribine monophosphate (MZP) is a competitive inhibitor that induces the closed conformation. MPA is a potent inhibitor of mammalian IMPDHs but a poor inhibitor of the bacterial enzymes. MZP is a more potent inhibitor of bacterial IMPDH. Its function is as follows. Catalyzes the conversion of inosine 5'-phosphate (IMP) to xanthosine 5'-phosphate (XMP), the first committed and rate-limiting step in the de novo synthesis of guanine nucleotides, and therefore plays an important role in the regulation of cell growth. This chain is Inosine-5'-monophosphate dehydrogenase, found in Rhodopirellula baltica (strain DSM 10527 / NCIMB 13988 / SH1).